The primary structure comprises 239 residues: 1-(5-phosphoribosyl)-5-[(5-phosphoribosylamino)methylideneamino] imidazole-4-carboxamide isomerase (239 aa).

The Proton acceptor role is filled by D9. Catalysis depends on D131, which acts as the Proton donor.

It belongs to the HisA/HisF family.

Its subcellular location is the cytoplasm. It catalyses the reaction 1-(5-phospho-beta-D-ribosyl)-5-[(5-phospho-beta-D-ribosylamino)methylideneamino]imidazole-4-carboxamide = 5-[(5-phospho-1-deoxy-D-ribulos-1-ylimino)methylamino]-1-(5-phospho-beta-D-ribosyl)imidazole-4-carboxamide. Its pathway is amino-acid biosynthesis; L-histidine biosynthesis; L-histidine from 5-phospho-alpha-D-ribose 1-diphosphate: step 4/9. The chain is 1-(5-phosphoribosyl)-5-[(5-phosphoribosylamino)methylideneamino] imidazole-4-carboxamide isomerase from Phocaeicola vulgatus (strain ATCC 8482 / DSM 1447 / JCM 5826 / CCUG 4940 / NBRC 14291 / NCTC 11154) (Bacteroides vulgatus).